The following is a 174-amino-acid chain: DNA replication inhibitor plutonium (174 aa).

ANK repeat units lie at residues 39 to 68 (YGNTALLKACYLGRFECARTLLEFGANIFA) and 72 to 103 (FGQNALTLATYAGHLTLVKELLRRRSYKDFNL). Position 167 is a phosphothreonine (threonine 167).

Its function is as follows. Inhibits DNA replication early in developments. May bind and block the action of a replication or initiation factor. This is DNA replication inhibitor plutonium (plu) from Drosophila melanogaster (Fruit fly).